The primary structure comprises 314 residues: Cytochrome f (314 aa).

A signal peptide spans M1–A30. Heme is bound by residues Y31, C51, C54, and H55. Residues I280 to K300 traverse the membrane as a helical segment.

Belongs to the cytochrome f family. As to quaternary structure, the 4 large subunits of the cytochrome b6-f complex are cytochrome b6, subunit IV (17 kDa polypeptide, petD), cytochrome f and the Rieske protein, while the 4 small subunits are PetG, PetL, PetM and PetN. The complex functions as a dimer. Heme serves as cofactor.

It is found in the plastid. The protein resides in the chloroplast thylakoid membrane. Its function is as follows. Component of the cytochrome b6-f complex, which mediates electron transfer between photosystem II (PSII) and photosystem I (PSI), cyclic electron flow around PSI, and state transitions. This Thalassiosira pseudonana (Marine diatom) protein is Cytochrome f.